Reading from the N-terminus, the 435-residue chain is Nuclear hormone receptor family member nhr-28 (435 aa).

The segment at residues 5-80 (KKPCSVCGEA…VGMRKSAVQR (76 aa)) is a DNA-binding region (nuclear receptor). NR C4-type zinc fingers lie at residues 8–28 (CSVC…CRAC) and 44–63 (CRAM…CRAC). Positions 84-106 (LFGRQDSSDGSNPRVSPSTSWPM) are disordered. A compositionally biased stretch (polar residues) spans 91 to 104 (SDGSNPRVSPSTSW). The NR LBD domain occupies 113–374 (IEEPGMATLN…ETFYELVSGR (262 aa)).

The protein belongs to the nuclear hormone receptor family.

It is found in the nucleus. In terms of biological role, orphan nuclear receptor. The protein is Nuclear hormone receptor family member nhr-28 of Caenorhabditis briggsae.